A 466-amino-acid chain; its full sequence is ATP-dependent protease ATPase subunit HslU (466 aa).

ATP-binding positions include I18, 60-65 (GVGKTE), D279, E344, and R416.

Belongs to the ClpX chaperone family. HslU subfamily. As to quaternary structure, a double ring-shaped homohexamer of HslV is capped on each side by a ring-shaped HslU homohexamer. The assembly of the HslU/HslV complex is dependent on binding of ATP.

It localises to the cytoplasm. Functionally, ATPase subunit of a proteasome-like degradation complex; this subunit has chaperone activity. The binding of ATP and its subsequent hydrolysis by HslU are essential for unfolding of protein substrates subsequently hydrolyzed by HslV. HslU recognizes the N-terminal part of its protein substrates and unfolds these before they are guided to HslV for hydrolysis. The chain is ATP-dependent protease ATPase subunit HslU from Syntrophomonas wolfei subsp. wolfei (strain DSM 2245B / Goettingen).